The primary structure comprises 116 residues: UPF0342 protein RBAM_010030 (116 aa).

The protein belongs to the UPF0342 family.

This chain is UPF0342 protein RBAM_010030, found in Bacillus velezensis (strain DSM 23117 / BGSC 10A6 / LMG 26770 / FZB42) (Bacillus amyloliquefaciens subsp. plantarum).